The following is a 160-amino-acid chain: UPF0178 protein BPP1051 (160 aa).

The protein belongs to the UPF0178 family.

The protein is UPF0178 protein BPP1051 of Bordetella parapertussis (strain 12822 / ATCC BAA-587 / NCTC 13253).